The following is a 157-amino-acid chain: SsrA-binding protein (157 aa).

The protein belongs to the SmpB family.

Its subcellular location is the cytoplasm. Functionally, required for rescue of stalled ribosomes mediated by trans-translation. Binds to transfer-messenger RNA (tmRNA), required for stable association of tmRNA with ribosomes. tmRNA and SmpB together mimic tRNA shape, replacing the anticodon stem-loop with SmpB. tmRNA is encoded by the ssrA gene; the 2 termini fold to resemble tRNA(Ala) and it encodes a 'tag peptide', a short internal open reading frame. During trans-translation Ala-aminoacylated tmRNA acts like a tRNA, entering the A-site of stalled ribosomes, displacing the stalled mRNA. The ribosome then switches to translate the ORF on the tmRNA; the nascent peptide is terminated with the 'tag peptide' encoded by the tmRNA and targeted for degradation. The ribosome is freed to recommence translation, which seems to be the essential function of trans-translation. The sequence is that of SsrA-binding protein from Clostridium kluyveri (strain NBRC 12016).